The primary structure comprises 124 residues: ATP synthase epsilon chain (124 aa).

Belongs to the ATPase epsilon chain family. F-type ATPases have 2 components, CF(1) - the catalytic core - and CF(0) - the membrane proton channel. CF(1) has five subunits: alpha(3), beta(3), gamma(1), delta(1), epsilon(1). CF(0) has three main subunits: a, b and c.

The protein resides in the cell membrane. Produces ATP from ADP in the presence of a proton gradient across the membrane. This Corynebacterium efficiens (strain DSM 44549 / YS-314 / AJ 12310 / JCM 11189 / NBRC 100395) protein is ATP synthase epsilon chain.